The primary structure comprises 538 residues: Coiled-coil domain-containing protein 8 (538 aa).

Residues 58 to 128 form a disordered region; that stretch reads IMEKSTPHPP…QGPRRGKKVR (71 aa). The span at 119 to 128 shows a compositional bias: basic residues; the sequence is QGPRRGKKVR. S142, S146, and S261 each carry phosphoserine. Residues 213-473 form a disordered region; that stretch reads WAPRAGPGVG…GTAPGARARK (261 aa). Basic and acidic residues predominate over residues 301-313; sequence DSQREEAIADQRE. A compositionally biased stretch (low complexity) spans 321 to 332; it reads AGAPADQGAEAA. Residues 349–366 are a coiled coil; sequence AEEGAEAADNQREEAADN. Composition is skewed to basic and acidic residues over residues 357-373, 381-392, and 405-419; these read DNQR…EAPA, DNHREEAADNQR, and DNQR…RERA. 2 stretches are compositionally biased toward low complexity: residues 428 to 438 and 458 to 469; these read QRAQARAGQRA and AAQGTTGTAPGA. The short motif at 500-506 is the PxLPxI/L motif; mediates interaction with ANKRA2 element; the sequence is PRLPTLP. Residues 514 to 535 are a coiled coil; the sequence is EARNLRVLRAEARAEAEQGEQE.

In terms of assembly, component of the 3M complex, composed of core components CUL7, CCDC8 and OBSL1. Interacts (via PxLPxI/L motif) with ANKRA2 (via ankyrin repeats); may link the 3M complex to histone deacetylases including HDAC4 and HDAC5. Widely expressed with low levels in spleen, skeletal muscle, small intestine, kidney and liver.

It localises to the cytoplasm. It is found in the cytoskeleton. The protein resides in the microtubule organizing center. The protein localises to the centrosome. Functionally, core component of the 3M complex, a complex required to regulate microtubule dynamics and genome integrity. It is unclear how the 3M complex regulates microtubules, it could act by controlling the level of a microtubule stabilizer. Required for localization of CUL7 to the centrosome. This Homo sapiens (Human) protein is Coiled-coil domain-containing protein 8 (CCDC8).